A 909-amino-acid polypeptide reads, in one-letter code: E3 ubiquitin-protein ligase HACE1 (909 aa).

The tract at residues Met1 to Val21 is N-terminal helix important for homodimerization. ANK repeat units lie at residues Leu23–Phe55, Val64–Tyr93, Ser97–Ile126, Glu130–Val159, Met163–Arg192, Ser196–Asp226, and Asn228–Pro253. A disordered region spans residues Lys396–Gly433. One can recognise an HECT domain in the interval Asn574 to Ala909. The active-site Glycyl thioester intermediate is Cys876.

In terms of assembly, homodimer. The homodimer is autoinhibited and stabilized by its N-terminal helix. Interacts with RAB1 (RAB1A, RAB1B or RAB1C), RAB4 (RAB4A or RAB4B) and RAB11 (RAB11A or RAB11B); in a GTP-dependent manner. Interacts with the 26S proteasomal complex through the 20S core proteasomal subunit. Interacts with RARB. In terms of processing, autoubiquitinated.

It is found in the golgi apparatus. The protein resides in the golgi stack membrane. The protein localises to the cytoplasm. It localises to the endoplasmic reticulum. The catalysed reaction is S-ubiquitinyl-[E2 ubiquitin-conjugating enzyme]-L-cysteine + [acceptor protein]-L-lysine = [E2 ubiquitin-conjugating enzyme]-L-cysteine + N(6)-ubiquitinyl-[acceptor protein]-L-lysine.. Its pathway is protein modification; protein ubiquitination. E3 ubiquitin-protein ligase involved in Golgi membrane fusion and regulation of small GTPases. Acts as a regulator of Golgi membrane dynamics during the cell cycle: recruited to Golgi membrane by Rab proteins and regulates postmitotic Golgi membrane fusion. Acts by mediating ubiquitination during mitotic Golgi disassembly, ubiquitination serving as a signal for Golgi reassembly later, after cell division. Specifically binds GTP-bound RAC1, mediating ubiquitination and subsequent degradation of active RAC1, thereby playing a role in host defense against pathogens. May also act as a transcription regulator via its interaction with RARB. The protein is E3 ubiquitin-protein ligase HACE1 (HACE1) of Bos taurus (Bovine).